Consider the following 533-residue polypeptide: Metallothionein expression activator (533 aa).

C2H2-type zinc fingers lie at residues 443-472 (YVCL…SDRP) and 473-500 (YRCD…NGRP). The C2H2-type 3; atypical zinc finger occupies 501–524 (YVCECLKRFNRLDALNRHKQRNIC).

It is found in the nucleus. Functionally, regulates the transcription of genes required for cell separation. The protein is Metallothionein expression activator (ace2) of Schizosaccharomyces pombe (strain 972 / ATCC 24843) (Fission yeast).